The following is a 593-amino-acid chain: Thiol:disulfide interchange protein DsbD (593 aa).

The N-terminal stretch at 1–21 is a signal peptide; it reads MRALLTFFVAGLLVLSSPAMA. Cystine bridges form between C130/C136 and C207/C328. Transmembrane regions (helical) follow at residues 193–215, 235–257, 269–291, 318–340, 347–369, 384–401, 408–425, and 440–462; these read LLFLALGVGLAFTPCVLPMYPIL, LVYVQGMALTYTLLGLVVASAGL, LIGLSILFVTLALSMFGVYTLQL, GAISGLVCSPCTTAPLSGALLYV, LTGGVALYALAMGMGIPLILVAV, RVKTLFGFVLLAAPIFLL, MWSTALWSALGIAAFGWL, and SAVGIIAVLGLFASAQPALNYWF. One can recognise a Thioredoxin domain in the interval 451–593; it reads FASAQPALNY…FLEHIQRISN (143 aa). The cysteines at positions 508 and 511 are disulfide-linked.

The protein belongs to the thioredoxin family. DsbD subfamily.

Its subcellular location is the cell inner membrane. The enzyme catalyses [protein]-dithiol + NAD(+) = [protein]-disulfide + NADH + H(+). It catalyses the reaction [protein]-dithiol + NADP(+) = [protein]-disulfide + NADPH + H(+). Required to facilitate the formation of correct disulfide bonds in some periplasmic proteins and for the assembly of the periplasmic c-type cytochromes. Acts by transferring electrons from cytoplasmic thioredoxin to the periplasm. This transfer involves a cascade of disulfide bond formation and reduction steps. This is Thiol:disulfide interchange protein DsbD from Vibrio vulnificus (strain CMCP6).